Consider the following 319-residue polypeptide: Acetyl-coenzyme A carboxylase carboxyl transferase subunit alpha (319 aa).

The CoA carboxyltransferase C-terminal domain occupies 38–292; sequence ALDKKAETLL…GKAIEMMLKE (255 aa).

Belongs to the AccA family. Acetyl-CoA carboxylase is a heterohexamer composed of biotin carboxyl carrier protein (AccB), biotin carboxylase (AccC) and two subunits each of ACCase subunit alpha (AccA) and ACCase subunit beta (AccD).

It localises to the cytoplasm. It catalyses the reaction N(6)-carboxybiotinyl-L-lysyl-[protein] + acetyl-CoA = N(6)-biotinyl-L-lysyl-[protein] + malonyl-CoA. The protein operates within lipid metabolism; malonyl-CoA biosynthesis; malonyl-CoA from acetyl-CoA: step 1/1. Its function is as follows. Component of the acetyl coenzyme A carboxylase (ACC) complex. First, biotin carboxylase catalyzes the carboxylation of biotin on its carrier protein (BCCP) and then the CO(2) group is transferred by the carboxyltransferase to acetyl-CoA to form malonyl-CoA. The sequence is that of Acetyl-coenzyme A carboxylase carboxyl transferase subunit alpha from Cereibacter sphaeroides (strain ATCC 17029 / ATH 2.4.9) (Rhodobacter sphaeroides).